A 262-amino-acid chain; its full sequence is uncharacterized protein (262 aa).

The 65-residue stretch at 6-70 (LRINQFLAHY…LKNKKFSVLV (65 aa)) folds into the S4 RNA-binding domain. Aspartate 108 serves as the catalytic Nucleophile.

It belongs to the pseudouridine synthase RsuA family.

The catalysed reaction is a uridine in RNA = a pseudouridine in RNA. This is an uncharacterized protein from Helicobacter pylori (strain J99 / ATCC 700824) (Campylobacter pylori J99).